The chain runs to 411 residues: MTAHKIVMLVLDGIGDRPCGELAGMTPLQAAKTPILDQLAAEGITGIMDTIGPGIRPGSDTSHLSLLGYPPESYYTGRGPLEAEGCGIHMEHGMIGFRANFATQNDHGLVTDRRAGRIHDTRLLSAAITDQVDLSAFGVTFSFASGAGHRAALALSGEGLGAGVTSNDPKEDGVAPHQVMPVSANPEDQKTAAVCNEFIRQSTAILADHPMNRARVLNGESPASVVLIRGAGEMGGFEPFQQRYDLSGAVIAAATLVTGIGKAVGLEYIPVEGVTGSTTTNLTGKVQTLMATLDTHDFVLLNIKGADEAGHDGHAIEKRDFIERIDAALALLLERNDCIIAVMGDHSTPCPIKEHSADPVPVLIRGDGVRVDLVQAYDEIACAAGGLNRIRGADILWILLDLIDKTHKYGT.

Belongs to the BPG-independent phosphoglycerate mutase family. A-PGAM subfamily.

It carries out the reaction (2R)-2-phosphoglycerate = (2R)-3-phosphoglycerate. The protein operates within carbohydrate degradation; glycolysis; pyruvate from D-glyceraldehyde 3-phosphate: step 3/5. Catalyzes the interconversion of 2-phosphoglycerate and 3-phosphoglycerate. In Methanosphaerula palustris (strain ATCC BAA-1556 / DSM 19958 / E1-9c), this protein is 2,3-bisphosphoglycerate-independent phosphoglycerate mutase.